Reading from the N-terminus, the 515-residue chain is Glucose-6-phosphate 1-dehydrogenase X (515 aa).

N-acetylalanine is present on Ala-2. Residues 38–45, Arg-72, Tyr-147, and Lys-171 each bind NADP(+); that span reads GASGDLAK. Residues Lys-171, 201-205, Glu-239, and Asp-258 each bind D-glucose 6-phosphate; that span reads HYLGK. The active-site Proton acceptor is His-263. Arg-357 lines the NADP(+) pocket. 2 residues coordinate D-glucose 6-phosphate: Lys-360 and Arg-365. Residues Lys-366, Arg-370, and Arg-393 each contribute to the NADP(+) site. A D-glucose 6-phosphate-binding site is contributed by Gln-395. NADP(+)-binding positions include 401–403, 421–423, Arg-487, and Tyr-503; these read YTK and DLT. Phosphotyrosine is present on Tyr-507. Residue Trp-509 participates in NADP(+) binding.

This sequence belongs to the glucose-6-phosphate dehydrogenase family. In terms of assembly, homotetramer; dimer of dimers. Interacts with SIRT2; the interaction is enhanced by H(2)O(2) treatment. Forms a ternary complex with ALDOB and TP53; this interaction is direct. ALDOB stabilizes the complex inhibiting G6PD activity and keeping oxidative pentose phosphate metabolism in check. Acetylated by ELP3 at Lys-403; acetylation inhibits its homodimerization and enzyme activity. Deacetylated by SIRT2 at Lys-403; deacetylation stimulates its enzyme activity.

Its subcellular location is the cytoplasm. The protein resides in the cytosol. It is found in the membrane. The catalysed reaction is D-glucose 6-phosphate + NADP(+) = 6-phospho-D-glucono-1,5-lactone + NADPH + H(+). It functions in the pathway carbohydrate degradation; pentose phosphate pathway; D-ribulose 5-phosphate from D-glucose 6-phosphate (oxidative stage): step 1/3. In terms of biological role, catalyzes the rate-limiting step of the oxidative pentose-phosphate pathway, which represents a route for the dissimilation of carbohydrates besides glycolysis. The main function of this enzyme is to provide reducing power (NADPH) and pentose phosphates for fatty acid and nucleic acid synthesis. This is Glucose-6-phosphate 1-dehydrogenase X (G6pdx) from Mus musculus (Mouse).